The primary structure comprises 1183 residues: Translation initiation factor IF-2 (1183 aa).

Disordered stretches follow at residues 65-512 and 540-579; these read SSKN…KVHI and LARPSKPKVGKRNNGKPLTALKKRKKETTRQRQRRRAMEL. Residues 83–99 show a composition bias toward basic and acidic residues; sequence TQKDQKTEPKKKNHDQT. A compositionally biased stretch (polar residues) spans 100–130; the sequence is ELSQAKLNTLLKPSQTLIKSQGSSQANNQKA. Positions 220 to 229 are enriched in basic and acidic residues; sequence PKIDIQDKKP. Residues 231-270 are compositionally biased toward polar residues; that stretch reads QPNNQKAKTRINQGEISPQKVGQGNIQKIKSQNKQNAPSR. Basic and acidic residues predominate over residues 288 to 304; the sequence is IRKEKPVNKPHTNEVRN. Composition is skewed to polar residues over residues 321 to 336 and 357 to 367; these read ANRQGLSNRPGSNNRI and NRTTQGQNRPG. The segment covering 485-499 has biased composition (basic and acidic residues); that stretch reads GRPDWDDSAKLDALR. Basic residues-rich tracts occupy residues 544–553 and 560–574; these read SKPKVGKRNN and LKKRKKETTRQRQRR. The tr-type G domain occupies 675 to 847; it reads RRPPVVTVMG…VLLVTEVEDL (173 aa). The interval 684–691 is G1; sequence GHVDHGKT. GTP is bound at residue 684–691; the sequence is GHVDHGKT. Residues 709–713 form a G2 region; the sequence is GITQH. Residues 734–737 form a G3 region; that stretch reads DTPG. Residues 734 to 738 and 788 to 791 each bind GTP; these read DTPGH and NKID. Residues 788–791 are G4; the sequence is NKID. A G5 region spans residues 824–826; sequence SAI.

It belongs to the TRAFAC class translation factor GTPase superfamily. Classic translation factor GTPase family. IF-2 subfamily.

Its subcellular location is the cytoplasm. One of the essential components for the initiation of protein synthesis. Protects formylmethionyl-tRNA from spontaneous hydrolysis and promotes its binding to the 30S ribosomal subunits. Also involved in the hydrolysis of GTP during the formation of the 70S ribosomal complex. The sequence is that of Translation initiation factor IF-2 from Prochlorococcus marinus (strain NATL2A).